We begin with the raw amino-acid sequence, 453 residues long: Carbamoyl phosphate synthase arginine-specific small chain (453 aa).

The transit peptide at 1-33 (MFSRLAARLPKASALNGVAARQVRNLSQPAITG) directs the protein to the mitochondrion. A disordered region spans residues 26–50 (LSQPAITGSKGRNMPAREPRTTAAA). Ser-97, Gly-280, and Gly-282 together coordinate L-glutamine. A Glutamine amidotransferase type-1 domain is found at 233–420 (HVALIDCGVK…MENVELFKSN (188 aa)). Cys-309 serves as the catalytic Nucleophile. L-glutamine is bound by residues Leu-310, Gln-313, Asn-351, Gly-353, and Tyr-354. Residues His-393 and Glu-395 contribute to the active site.

It belongs to the CarA family. As to quaternary structure, heterodimer composed of 2 chains; the small (or glutamine) chain promotes the hydrolysis of glutamine to ammonia, which is used by the large (or ammonia) chain to synthesize carbamoyl phosphate.

The protein resides in the mitochondrion matrix. It carries out the reaction hydrogencarbonate + L-glutamine + 2 ATP + H2O = carbamoyl phosphate + L-glutamate + 2 ADP + phosphate + 2 H(+). The catalysed reaction is L-glutamine + H2O = L-glutamate + NH4(+). It participates in amino-acid biosynthesis; L-arginine biosynthesis; carbamoyl phosphate from bicarbonate: step 1/1. Its function is as follows. Small subunit of the arginine-specific carbamoyl phosphate synthase (CPSase). CPSase catalyzes the formation of carbamoyl phosphate from the ammonia moiety of glutamine, carbonate, and phosphate donated by ATP, the first step of the arginine biosynthetic pathway. The small subunit (glutamine amidotransferase) binds and cleaves glutamine to supply the large subunit with the substrate ammonia. This Neurospora crassa (strain ATCC 24698 / 74-OR23-1A / CBS 708.71 / DSM 1257 / FGSC 987) protein is Carbamoyl phosphate synthase arginine-specific small chain (arg-2).